A 485-amino-acid chain; its full sequence is ATP-dependent 6-phosphofructokinase 7 (485 aa).

ATP contacts are provided by residues G101, 164-165 (RG), and 189-192 (GDGT). D190 lines the Mg(2+) pocket. Residues 218–220 (TID), 263–265 (MGR), E319, and 374–377 (YMIR) contribute to the substrate site. D220 acts as the Proton acceptor in catalysis. Positions 449-485 (SFLGPKDTSEEKKELPETPLLDDGAVDIPPVTKEVTK) are disordered. Basic and acidic residues predominate over residues 455–464 (DTSEEKKELP).

This sequence belongs to the phosphofructokinase type A (PFKA) family. PPi-dependent PFK group II subfamily. Atypical ATP-dependent clade 'X' sub-subfamily. Homotetramer. It depends on Mg(2+) as a cofactor. As to expression, expressed in roots, leaves, stems and flowers.

It is found in the cytoplasm. The catalysed reaction is beta-D-fructose 6-phosphate + ATP = beta-D-fructose 1,6-bisphosphate + ADP + H(+). The protein operates within carbohydrate degradation; glycolysis; D-glyceraldehyde 3-phosphate and glycerone phosphate from D-glucose: step 3/4. Allosterically activated by AMP. Catalyzes the phosphorylation of D-fructose 6-phosphate to fructose 1,6-bisphosphate by ATP, the first committing step of glycolysis. The chain is ATP-dependent 6-phosphofructokinase 7 from Arabidopsis thaliana (Mouse-ear cress).